Reading from the N-terminus, the 208-residue chain is Large ribosomal subunit protein uL4 (208 aa).

A disordered region spans residues 42–77; sequence SMRQGTHKTKTKTEVSGGGRKPWRQKGTGRARQGSI.

It belongs to the universal ribosomal protein uL4 family. As to quaternary structure, part of the 50S ribosomal subunit.

Functionally, one of the primary rRNA binding proteins, this protein initially binds near the 5'-end of the 23S rRNA. It is important during the early stages of 50S assembly. It makes multiple contacts with different domains of the 23S rRNA in the assembled 50S subunit and ribosome. Forms part of the polypeptide exit tunnel. In Spiroplasma kunkelii, this protein is Large ribosomal subunit protein uL4.